The sequence spans 313 residues: tRNA (guanine-N(7)-)-methyltransferase (313 aa).

S-adenosyl-L-methionine is bound by residues Glu33, Glu58, and Asp85. Substrate-binding positions include Lys112, Asp144, and 177–180 (TRYE).

This sequence belongs to the class I-like SAM-binding methyltransferase superfamily. TrmB family.

The catalysed reaction is guanosine(46) in tRNA + S-adenosyl-L-methionine = N(7)-methylguanosine(46) in tRNA + S-adenosyl-L-homocysteine. It functions in the pathway tRNA modification; N(7)-methylguanine-tRNA biosynthesis. Catalyzes the formation of N(7)-methylguanine at position 46 (m7G46) in tRNA. The sequence is that of tRNA (guanine-N(7)-)-methyltransferase from Thermotoga maritima (strain ATCC 43589 / DSM 3109 / JCM 10099 / NBRC 100826 / MSB8).